A 506-amino-acid chain; its full sequence is Histidine ammonia-lyase (506 aa).

Positions 144-146 form a cross-link, 5-imidazolinone (Ala-Gly); it reads ASG. Residue Ser-145 is modified to 2,3-didehydroalanine (Ser).

The protein belongs to the PAL/histidase family. Post-translationally, contains an active site 4-methylidene-imidazol-5-one (MIO), which is formed autocatalytically by cyclization and dehydration of residues Ala-Ser-Gly.

The protein resides in the cytoplasm. The enzyme catalyses L-histidine = trans-urocanate + NH4(+). The protein operates within amino-acid degradation; L-histidine degradation into L-glutamate; N-formimidoyl-L-glutamate from L-histidine: step 1/3. The protein is Histidine ammonia-lyase of Legionella pneumophila subsp. pneumophila (strain Philadelphia 1 / ATCC 33152 / DSM 7513).